The following is a 248-amino-acid chain: Mannose-binding protein C (248 aa).

Residues 1 to 20 form the signal peptide; the sequence is MSLFPSLPLLLLSMVAASYS. Residues 42 to 99 form the Collagen-like domain; it reads GINGFPGKDGRDGTKGEKGEPGQGLRGLQGPPGKLGPPGNPGPSGSPGPKGQKGDPGK. The tract at residues 43–113 is disordered; that stretch reads INGFPGKDGR…DSSLAASERK (71 aa). Position 47 is a hydroxyproline (Pro-47). Residues 49 to 61 show a composition bias toward basic and acidic residues; that stretch reads KDGRDGTKGEKGE. Hydroxyproline is present on residues Pro-73, Pro-79, Pro-82, and Pro-88. Positions 75–87 are enriched in pro residues; sequence KLGPPGNPGPSGS. The segment covering 93–102 has biased composition (basic and acidic residues); sequence QKGDPGKSPD. Residues 112–130 are a coiled coil; that stretch reads RKALQTEMARIKKWLTFSL. Residues 134 to 245 form the C-type lectin domain; it reads VGNKFFLTNG…CSTSHLAVCE (112 aa). 2 disulfides stabilise this stretch: Cys-155/Cys-244 and Cys-222/Cys-236.

As to quaternary structure, oligomeric complex of 3 or more homotrimers. Interacts with MASP1 and MASP2. Interacts with MEP1A and MEP1B and may inhibit their catalytic activity. Interacts with CR1 (via Sushi 24 and Sushi 25 domains). (Microbial infection) Interacts with SARS coronavirus-2/SARS-CoV-2 Spike glycoprotein homotrimer; the interaction is calcium-dependent and modulated by Spike glycoprotein glycosylation state. In terms of tissue distribution, plasma protein produced mainly in the liver.

It localises to the secreted. Its function is as follows. Calcium-dependent lectin involved in innate immune defense. Binds mannose, fucose and N-acetylglucosamine on different microorganisms and activates the lectin complement pathway. Binds to late apoptotic cells, as well as to apoptotic blebs and to necrotic cells, but not to early apoptotic cells, facilitating their uptake by macrophages. May bind DNA. Upon SARS coronavirus-2/SARS-CoV-2 infection, activates the complement lectin pathway which leads to the inhibition SARS-CoV-2 infection and a reduction of the induced inflammatory response. In Homo sapiens (Human), this protein is Mannose-binding protein C.